The chain runs to 122 residues: Small ribosomal subunit protein uS13 (122 aa).

Positions proline 97–lysine 122 are disordered.

Belongs to the universal ribosomal protein uS13 family. Part of the 30S ribosomal subunit. Forms a loose heterodimer with protein S19. Forms two bridges to the 50S subunit in the 70S ribosome.

Functionally, located at the top of the head of the 30S subunit, it contacts several helices of the 16S rRNA. In the 70S ribosome it contacts the 23S rRNA (bridge B1a) and protein L5 of the 50S subunit (bridge B1b), connecting the 2 subunits; these bridges are implicated in subunit movement. Contacts the tRNAs in the A and P-sites. The protein is Small ribosomal subunit protein uS13 of Bartonella tribocorum (strain CIP 105476 / IBS 506).